Consider the following 260-residue polypeptide: DNA repair protein RecO (260 aa).

Belongs to the RecO family.

Involved in DNA repair and RecF pathway recombination. The protein is DNA repair protein RecO of Desulfosudis oleivorans (strain DSM 6200 / JCM 39069 / Hxd3) (Desulfococcus oleovorans).